We begin with the raw amino-acid sequence, 240 residues long: Small ribosomal subunit protein uS3m (240 aa).

It belongs to the universal ribosomal protein uS3 family.

It localises to the mitochondrion. This Chondrus crispus (Carrageen Irish moss) protein is Small ribosomal subunit protein uS3m (RPS3).